Here is a 229-residue protein sequence, read N- to C-terminus: Vacuolar protein sorting-associated protein 24 homolog 1 (229 aa).

A coiled-coil region spans residues 15 to 60 (KQLLRDWQRKLRQECRNIERQIRDIQKEERNVQKAIKEAAKRNDMV). A disordered region spans residues 193 to 215 (VPAQKASTSREEEAVAEGVDDEE). Residues 206-215 (AVAEGVDDEE) are compositionally biased toward acidic residues.

Belongs to the SNF7 family. In terms of assembly, component of the endosomal sorting required for transport complex III (ESCRT-III), composed at least of VPS2, VPS20, VPS24 and VPS32. Interacts with SKD1.

The protein resides in the endosome. Component of the ESCRT-III complex, which is required for multivesicular bodies (MVBs) formation and sorting of endosomal cargo proteins into MVBs. The ESCRT-III complex is probably involved in the concentration of MVB cargo. This Arabidopsis thaliana (Mouse-ear cress) protein is Vacuolar protein sorting-associated protein 24 homolog 1 (VPS24-1).